Reading from the N-terminus, the 291-residue chain is tRNA pseudouridine synthase B (291 aa).

D41 functions as the Nucleophile in the catalytic mechanism.

Belongs to the pseudouridine synthase TruB family. Type 1 subfamily.

It catalyses the reaction uridine(55) in tRNA = pseudouridine(55) in tRNA. Responsible for synthesis of pseudouridine from uracil-55 in the psi GC loop of transfer RNAs. This Parasynechococcus marenigrum (strain WH8102) protein is tRNA pseudouridine synthase B.